Consider the following 217-residue polypeptide: dITP/XTP pyrophosphatase (217 aa).

Substrate is bound at residue 7 to 12; sequence SRNKKK. The active-site Proton acceptor is D72. D72 is a Mg(2+) binding site. Substrate-binding positions include S73, 163–166, K195, and 200–201; these read FGYD and HR.

Belongs to the HAM1 NTPase family. In terms of assembly, homodimer. Mg(2+) is required as a cofactor.

It carries out the reaction XTP + H2O = XMP + diphosphate + H(+). The enzyme catalyses dITP + H2O = dIMP + diphosphate + H(+). It catalyses the reaction ITP + H2O = IMP + diphosphate + H(+). Functionally, pyrophosphatase that catalyzes the hydrolysis of nucleoside triphosphates to their monophosphate derivatives, with a high preference for the non-canonical purine nucleotides XTP (xanthosine triphosphate), dITP (deoxyinosine triphosphate) and ITP. Seems to function as a house-cleaning enzyme that removes non-canonical purine nucleotides from the nucleotide pool, thus preventing their incorporation into DNA/RNA and avoiding chromosomal lesions. The polypeptide is dITP/XTP pyrophosphatase (Corynebacterium jeikeium (strain K411)).